The chain runs to 71 residues: UPF0346 protein Bcer98_1690 (71 aa).

This sequence belongs to the UPF0346 family.

This Bacillus cytotoxicus (strain DSM 22905 / CIP 110041 / 391-98 / NVH 391-98) protein is UPF0346 protein Bcer98_1690.